A 199-amino-acid chain; its full sequence is Recombination protein RecR (199 aa).

The C4-type zinc-finger motif lies at 56 to 71; that stretch reads CSICFNWSAEDPCEIC. Residues 79–174 enclose the Toprim domain; the sequence is STWCVVADVK…GLRMTRLAFG (96 aa).

This sequence belongs to the RecR family.

May play a role in DNA repair. It seems to be involved in an RecBC-independent recombinational process of DNA repair. It may act with RecF and RecO. The chain is Recombination protein RecR from Synechococcus sp. (strain JA-3-3Ab) (Cyanobacteria bacterium Yellowstone A-Prime).